The sequence spans 26 residues: SANPALAPRERKAGCKNFFWKTFTSC.

C15 and C26 are oxidised to a cystine.

This sequence belongs to the somatostatin family.

It is found in the secreted. In terms of biological role, somatostatin inhibits the release of somatotropin. The chain is Somatostatin-1 (sst1) from Amia calva (Bowfin).